The chain runs to 106 residues: A-type ATP synthase subunit F (106 aa).

It belongs to the V-ATPase F subunit family. As to quaternary structure, has multiple subunits with at least A(3), B(3), C, D, E, F, H, I and proteolipid K(x).

Its subcellular location is the cell membrane. Functionally, component of the A-type ATP synthase that produces ATP from ADP in the presence of a proton gradient across the membrane. The protein is A-type ATP synthase subunit F of Methanothermobacter thermautotrophicus (strain ATCC 29096 / DSM 1053 / JCM 10044 / NBRC 100330 / Delta H) (Methanobacterium thermoautotrophicum).